The primary structure comprises 595 residues: Aspartate--tRNA ligase (595 aa).

Position 173 (Glu-173) interacts with L-aspartate. Residues 197 to 200 are aspartate; it reads QLFK. L-aspartate is bound at residue Arg-219. Residues 219-221 and Gln-228 contribute to the ATP site; that span reads RDE. Position 449 (His-449) interacts with L-aspartate. Glu-483 is an ATP binding site. Arg-490 is a binding site for L-aspartate. An ATP-binding site is contributed by 535–538; sequence GLDR.

This sequence belongs to the class-II aminoacyl-tRNA synthetase family. Type 1 subfamily. As to quaternary structure, homodimer.

The protein resides in the cytoplasm. It catalyses the reaction tRNA(Asp) + L-aspartate + ATP = L-aspartyl-tRNA(Asp) + AMP + diphosphate. Its function is as follows. Catalyzes the attachment of L-aspartate to tRNA(Asp) in a two-step reaction: L-aspartate is first activated by ATP to form Asp-AMP and then transferred to the acceptor end of tRNA(Asp). The sequence is that of Aspartate--tRNA ligase from Shewanella sediminis (strain HAW-EB3).